The following is a 29-amino-acid chain: Glucagon (29 aa).

This sequence belongs to the glucagon family.

Its subcellular location is the secreted. Its function is as follows. Glucagon plays a key role in glucose metabolism and homeostasis. Regulates blood glucose by increasing gluconeogenesis and decreasing glycolysis. This is Glucagon (gcg) from Lampetra fluviatilis (European river lamprey).